Reading from the N-terminus, the 87-residue chain is MKTLLLTLVVVTIVCLDLGYTRTCLISPSSTPQTCPQGQGICFLKAQCDKFCSIRGPVIEQGCVATCPQFRSNYRSLLCCTTDNCNH.

An N-terminal signal peptide occupies residues 1–21 (MKTLLLTLVVVTIVCLDLGYT). 5 cysteine pairs are disulfide-bonded: cysteine 24-cysteine 42, cysteine 35-cysteine 63, cysteine 48-cysteine 52, cysteine 67-cysteine 79, and cysteine 80-cysteine 85.

The protein belongs to the three-finger toxin family. Long-chain subfamily. Kappa-neurotoxin sub-subfamily. In terms of assembly, homo- and heterodimer; non-covalently linked. In terms of tissue distribution, expressed by the venom gland.

The protein localises to the secreted. Functionally, postsynaptic neurotoxin that binds and inhibits neuronal nicotinic acetylcholine receptors (nAChR) with high affinity (IC(50)&lt;100 nM). Is a selective, and slowly reversible antagonist of alpha-3/CHRNA3-containing and some alpha-4/CHRNA4-containing AChRs. The protein is Kappa 1b-bungarotoxin of Bungarus candidus (Malayan krait).